The primary structure comprises 427 residues: Ribose-phosphate pyrophosphokinase 1 (427 aa).

Residues D128, H130, and D143 each coordinate Mg(2+). S199, S218, S271, and S295 each carry phosphoserine.

The protein belongs to the ribose-phosphate pyrophosphokinase family.

The protein resides in the cytoplasm. It catalyses the reaction D-ribose 5-phosphate + ATP = 5-phospho-alpha-D-ribose 1-diphosphate + AMP + H(+). It functions in the pathway metabolic intermediate biosynthesis; 5-phospho-alpha-D-ribose 1-diphosphate biosynthesis; 5-phospho-alpha-D-ribose 1-diphosphate from D-ribose 5-phosphate (route I): step 1/1. In terms of biological role, 5-phosphoribose 1-diphosphate synthase involved in nucleotide, histidine, and tryptophan biosynthesis. Active in heteromultimeric complexes with other 5-phosphoribose 1-diphosphate synthases (PRS2, PRS3, PRS4 and PRS5). The sequence is that of Ribose-phosphate pyrophosphokinase 1 (PRS1) from Saccharomyces cerevisiae (strain ATCC 204508 / S288c) (Baker's yeast).